A 94-amino-acid polypeptide reads, in one-letter code: Co-chaperonin GroES (94 aa).

The protein belongs to the GroES chaperonin family. In terms of assembly, heptamer of 7 subunits arranged in a ring. Interacts with the chaperonin GroEL.

It localises to the cytoplasm. Functionally, together with the chaperonin GroEL, plays an essential role in assisting protein folding. The GroEL-GroES system forms a nano-cage that allows encapsulation of the non-native substrate proteins and provides a physical environment optimized to promote and accelerate protein folding. GroES binds to the apical surface of the GroEL ring, thereby capping the opening of the GroEL channel. In Streptococcus pneumoniae (strain ATCC BAA-255 / R6), this protein is Co-chaperonin GroES.